Consider the following 476-residue polypeptide: MFAAGLAPFYASNFSLWSAAYCSSAGPGGCSFALDPAAVKKPSFCIADILHAGVGEPGPAAEGLVGASAALTAHLGSVHPHASFQAAARSPLRPTPVVAPSEVPAGFPQRLSPLSAAYHQHLPQQPPTQQQQPQQQPPPPPRAGSLQPPTSGTRVVPHHSGSAPAPSSKDLKFGIDRILSAEFDPKVKEGNTLRDLTSLLTGGRPTGVHLAGLQPSAGQFFASLDPISEASAILSPLSSNPRNSVQHQFQDTFPGPYAVLTKDTMPQTYKRKRSWSRAVFSNLQRKGLEKRFEIQKYVTKPDRKQLAAMLGLTDAQVKVWFQNRRMKWRHSKEAQAQKDKDKEAGEKPSGGVPAEGEREERSPSRSEGEAESESSDSESLDMAPSDTERTEGTERSLHQTTVIKASAAGALITASSSASGSSFSFSSSSSLGSSNGSAGSASSLGSNCSELLPSHQPSVTSGPQSPEIAQVPLAGL.

3 disordered regions span residues 121-170 (HLPQ…SSKD), 328-401 (WRHS…HQTT), and 413-476 (TASS…LAGL). Residues 158 to 168 (HHSGSAPAPSS) show a composition bias toward low complexity. Residues 273 to 332 (RSWSRAVFSNLQRKGLEKRFEIQKYVTKPDRKQLAAMLGLTDAQVKVWFQNRRMKWRHSK) constitute a DNA-binding region (homeobox). 2 stretches are compositionally biased toward basic and acidic residues: residues 331–346 (SKEAQAQKDKDKEAGE) and 355–368 (EGEREERSPSRSEG). Over residues 369-379 (EAESESSDSES) the composition is skewed to acidic residues. Residues 386-397 (DTERTEGTERSL) are compositionally biased toward basic and acidic residues. Low complexity predominate over residues 413–446 (TASSSASGSSFSFSSSSSLGSSNGSAGSASSLGS). The span at 455–464 (HQPSVTSGPQ) shows a compositional bias: polar residues.

Belongs to the H2.0 homeobox family.

Its subcellular location is the nucleus. Its function is as follows. Transcription factor required for TBX21/T-bet-dependent maturation of Th1 cells as well as maintenance of Th1-specific gene expression. Involved in embryogenesis and hematopoiesis. The sequence is that of H2.0-like homeobox protein (Hlx) from Rattus norvegicus (Rat).